A 217-amino-acid polypeptide reads, in one-letter code: Probable transaldolase (217 aa).

K83 (schiff-base intermediate with substrate) is an active-site residue.

Belongs to the transaldolase family. Type 3B subfamily.

It is found in the cytoplasm. It catalyses the reaction D-sedoheptulose 7-phosphate + D-glyceraldehyde 3-phosphate = D-erythrose 4-phosphate + beta-D-fructose 6-phosphate. The protein operates within carbohydrate degradation; pentose phosphate pathway; D-glyceraldehyde 3-phosphate and beta-D-fructose 6-phosphate from D-ribose 5-phosphate and D-xylulose 5-phosphate (non-oxidative stage): step 2/3. In terms of biological role, transaldolase is important for the balance of metabolites in the pentose-phosphate pathway. The polypeptide is Probable transaldolase (Caldicellulosiruptor saccharolyticus (strain ATCC 43494 / DSM 8903 / Tp8T 6331)).